Reading from the N-terminus, the 287-residue chain is MYRDRGTVNSRPEVVDRKRINDALERPSPSTSRQVNGKGKGTVTAATTTANLIGKQQSNNINHRDSRSASLSKNNTVSDDESDTDSEESDVSGSDGEDTSWISWFCNLRGNEFFCEVDDDYIQDDFNLCGLSSLVPYYEYALDLILDVESSQGEMFTEEQNELIESAAEMLYGLIHARYILTSKGLAAMLDKYKNYDFGRCPRVYCCGQPCLPVGQSDLPRSSTVKIYCPKCEDIYYPRSKYQGNIDGAYFGTTFPHLFLMTYGHLKPAKATQNYVQRVFGFKLHKP.

Residues 1 to 97 are disordered; sequence MYRDRGTVNS…ESDVSGSDGE (97 aa). The span at 13–25 shows a compositional bias: basic and acidic residues; the sequence is EVVDRKRINDALE. Low complexity predominate over residues 41–50; that stretch reads GTVTAATTTA. Over residues 78–97 the composition is skewed to acidic residues; that stretch reads SDDESDTDSEESDVSGSDGE.

Belongs to the casein kinase 2 subunit beta family. As to quaternary structure, heterotetramer of two catalytic alpha subunits and two regulatory beta subunits. Interacts with CCA1. Interacts with LHY. In terms of processing, phosphorylated by alpha subunit.

The protein resides in the cytoplasm. It localises to the cytosol. The protein localises to the nucleus. Its function is as follows. Plays a complex role in regulating the basal catalytic activity of the alpha subunit. The tetrameric holoenzyme CK2, composed of two alpha and two beta subunits, phosphorylates the transcription factor GBFl, resulting in stimulation of its DNA binding activity. CK2 phosphorylates the transcription factor PIF1 after an exposure to light, resulting in a proteasome-dependent degradation of PIF1 and promotion of photomorphogenesis. CK2 phosphorylates translation initiation factors. May participate in the regulation of the initiation of translation. Stimulates the binding of CCA1 to promoters. The sequence is that of Casein kinase II subunit beta-1 (CKB1) from Arabidopsis thaliana (Mouse-ear cress).